The primary structure comprises 360 residues: Glyceraldehyde-3-phosphate dehydrogenase (360 aa).

Residues 13–14 (RI), Asp-35, and Arg-82 contribute to the NAD(+) site. D-glyceraldehyde 3-phosphate contacts are provided by residues 153–155 (SCT), Thr-184, 213–214 (TG), and Arg-236. Cys-154 (nucleophile) is an active-site residue. Asn-318 provides a ligand contact to NAD(+).

The protein belongs to the glyceraldehyde-3-phosphate dehydrogenase family. Homotetramer.

The enzyme catalyses D-glyceraldehyde 3-phosphate + phosphate + NAD(+) = (2R)-3-phospho-glyceroyl phosphate + NADH + H(+). Its pathway is carbohydrate degradation; glycolysis; pyruvate from D-glyceraldehyde 3-phosphate: step 1/5. In terms of biological role, key enzyme in glycolysis that catalyzes the first step of the pathway by converting D-glyceraldehyde 3-phosphate (G3P) into 3-phospho-D-glyceroyl phosphate. Essential for the maintenance of cellular ATP levels and carbohydrate metabolism. In Atriplex nummularia (Old man saltbush), this protein is Glyceraldehyde-3-phosphate dehydrogenase.